Here is a 904-residue protein sequence, read N- to C-terminus: MYTTTLSVQGMTCTSCVASIQSMLEGVEGIEQFTISLLLERAIAVHDPSIISPDQIAEKIEDCGFDASVISSTEGEHGVMANYLLLSPMQAEQWTKVHNHINELQGVLSVNCSSSPDAAIRVIYDSEITGPRSIMKEILSMGVKCTFQPVDSSTSRILSLQRGSQIRVWKIRFIISISFSLAVMFLPQIFDSCDSMRAAFLVPHYFGICAGHIISLVLSLPVQFGVGRVYYSAAYHALKRGTANMDVLVSLGSTVAFAASIFFMILYSARHADNPAPIFFDTADMLLTFVTLGRYLESKAKGSTSAALSQLLSLAPSSATIIEDNEQIEILADLIERGDLILVKPGEIIPVDGTVVEGSSYVDESSVSGEPVPVHKTIDDELLSGTANGNGRLLVKATKSPRESQLAVIVDLVQRAQISHAPIQQFADRVAGIFVPVIVALSISTFTFWFLFTKYSSKYPSVFDDPMGKFAVCLKLTISVVVVACPCALGLSTPTAVMVGTGVGALNGIIIKGGEILERLNQVDTVVFDKTGTLTVGKLSVTDISIVDNLEELLDIPKNIFWAFVKASESSSEHPIGKAITEKASEFTDVSEIGIESFNAVPGEGVDVVLRWKERTFHALLGNSLLLEHNNVSIPDDFDSKLKLSSSSGLTCVRIAIDGQFVGFLGCMDQVRPDSYQTVSALKQLGKKVCLLTGDQKATARRVAQGLEIDFSDVYAEAVPSQKAEIIQKLKDQKHCVAMVGDGINDSPSLVLADVGIAPINGSGIALESADVILVRKGVLLDTAVSFDLSRVIVKRIKMNLVWACIYNFVMIPIAMGFFLPWGIYLNPMWASAAMMFSSLSVLASSLLLRRWKKPKSLIFSEADDVETESSTNSSVLQKVYTATRSIFGRNKSSNKYQPVANEV.

Residues 1-172 (MYTTTLSVQG…GSQIRVWKIR (172 aa)) are Cytoplasmic-facing. An HMA domain is found at 2-68 (YTTTLSVQGM…KIEDCGFDAS (67 aa)). Cys-13 and Cys-16 together coordinate Cu(+). The helical transmembrane segment at 173-193 (FIISISFSLAVMFLPQIFDSC) threads the bilayer. The Lumenal, vesicle segment spans residues 194 to 197 (DSMR). Residues 198–218 (AAFLVPHYFGICAGHIISLVL) traverse the membrane as a helical segment. Topologically, residues 219 to 246 (SLPVQFGVGRVYYSAAYHALKRGTANMD) are cytoplasmic. The helical transmembrane segment at 247–267 (VLVSLGSTVAFAASIFFMILY) threads the bilayer. Residues 268–278 (SARHADNPAPI) are Lumenal, vesicle-facing. The helical transmembrane segment at 279 to 296 (FFDTADMLLTFVTLGRYL) threads the bilayer. The Cytoplasmic segment spans residues 297 to 431 (ESKAKGSTSA…PIQQFADRVA (135 aa)). The helical transmembrane segment at 432 to 452 (GIFVPVIVALSISTFTFWFLF) threads the bilayer. Residues 453–469 (TKYSSKYPSVFDDPMGK) are Lumenal, vesicle-facing. A helical transmembrane segment spans residues 470 to 490 (FAVCLKLTISVVVVACPCALG). The Cytoplasmic segment spans residues 491-805 (LSTPTAVMVG…RIKMNLVWAC (315 aa)). Residue Asp-529 is the 4-aspartylphosphate intermediate of the active site. Mg(2+)-binding residues include Asp-742 and Asp-746. The helical transmembrane segment at 806 to 826 (IYNFVMIPIAMGFFLPWGIYL) threads the bilayer. The Lumenal, vesicle segment spans residues 827 to 828 (NP). A helical membrane pass occupies residues 829–849 (MWASAAMMFSSLSVLASSLLL). Residues 850 to 904 (RRWKKPKSLIFSEADDVETESSTNSSVLQKVYTATRSIFGRNKSSNKYQPVANEV) are Cytoplasmic-facing.

The protein belongs to the cation transport ATPase (P-type) (TC 3.A.3) family. Type IB subfamily.

It localises to the golgi apparatus. It is found in the trans-Golgi network membrane. The catalysed reaction is Cu(+)(in) + ATP + H2O = Cu(+)(out) + ADP + phosphate + H(+). In terms of biological role, probably involved in copper transport and in the regulation of cellular copper level. Retrieves copper from the metallochaperone atx1 and incorporates it into trans-Golgi vesicles. In Schizosaccharomyces pombe (strain 972 / ATCC 24843) (Fission yeast), this protein is Copper-transporting ATPase ccc2 (ccc2).